Here is a 285-residue protein sequence, read N- to C-terminus: Inositol oxygenase (285 aa).

Substrate is bound at residue arginine 29. Position 33 is a phosphoserine (serine 33). 85–88 (DESD) is a binding site for substrate. Histidine 98, histidine 123, and aspartate 124 together coordinate Fe cation. Substrate-binding positions include lysine 127 and 141-142 (GD). Fe cation is bound by residues histidine 194, histidine 220, and aspartate 253. 220-221 (HS) serves as a coordination point for substrate.

Belongs to the myo-inositol oxygenase family. Fe cation is required as a cofactor. As to expression, kidney specific. Renal proximal tubules.

The protein resides in the cytoplasm. The enzyme catalyses myo-inositol + O2 = D-glucuronate + H2O + H(+). It functions in the pathway polyol metabolism; myo-inositol degradation into D-glucuronate; D-glucuronate from myo-inositol: step 1/1. The protein is Inositol oxygenase (Miox) of Mus musculus (Mouse).